A 417-amino-acid polypeptide reads, in one-letter code: GPI mannosyltransferase 2 (417 aa).

9 consecutive transmembrane segments (helical) span residues 10-30, 104-124, 142-162, 167-187, 206-226, 239-259, 312-332, 344-364, and 394-414; these read FLII…LVWL, IVLK…WIVY, LALT…LISV, IAFT…SFDV, FCFA…LFYV, ITSI…FVYF, IPNF…ITYF, YIWI…VQII, and YYVM…ACFL.

It belongs to the PIGV family.

The protein localises to the endoplasmic reticulum membrane. Its pathway is glycolipid biosynthesis; glycosylphosphatidylinositol-anchor biosynthesis. Mannosyltransferase involved in glycosylphosphatidylinositol-anchor biosynthesis. Transfers the second mannose to the glycosylphosphatidylinositol during GPI precursor assembly. The sequence is that of GPI mannosyltransferase 2 (GPI18) from Kluyveromyces lactis (strain ATCC 8585 / CBS 2359 / DSM 70799 / NBRC 1267 / NRRL Y-1140 / WM37) (Yeast).